The chain runs to 451 residues: Bifunctional protein GlmU (451 aa).

The segment at 1-230 (MNNPIAAIVL…PADVGGINSR (230 aa)) is pyrophosphorylase. UDP-N-acetyl-alpha-D-glucosamine is bound by residues 10-13 (LAAG), Lys24, Gln74, 79-80 (GT), 102-104 (YGD), Gly142, Glu156, Asn171, and Asn228. Position 104 (Asp104) interacts with Mg(2+). Position 228 (Asn228) interacts with Mg(2+). The tract at residues 231-251 (AELAAAEAQWQAFRREEAMAA) is linker. The interval 252–451 (GASLRAPETV…RKKKAAEQKK (200 aa)) is N-acetyltransferase. Positions 317 and 335 each coordinate UDP-N-acetyl-alpha-D-glucosamine. Residue His347 is the Proton acceptor of the active site. UDP-N-acetyl-alpha-D-glucosamine contacts are provided by Tyr350 and Asn361. Residues Ala364, 370–371 (NY), Ser389, Ala407, and Arg424 contribute to the acetyl-CoA site.

This sequence in the N-terminal section; belongs to the N-acetylglucosamine-1-phosphate uridyltransferase family. In the C-terminal section; belongs to the transferase hexapeptide repeat family. As to quaternary structure, homotrimer. The cofactor is Mg(2+).

The protein resides in the cytoplasm. The enzyme catalyses alpha-D-glucosamine 1-phosphate + acetyl-CoA = N-acetyl-alpha-D-glucosamine 1-phosphate + CoA + H(+). It carries out the reaction N-acetyl-alpha-D-glucosamine 1-phosphate + UTP + H(+) = UDP-N-acetyl-alpha-D-glucosamine + diphosphate. The protein operates within nucleotide-sugar biosynthesis; UDP-N-acetyl-alpha-D-glucosamine biosynthesis; N-acetyl-alpha-D-glucosamine 1-phosphate from alpha-D-glucosamine 6-phosphate (route II): step 2/2. It functions in the pathway nucleotide-sugar biosynthesis; UDP-N-acetyl-alpha-D-glucosamine biosynthesis; UDP-N-acetyl-alpha-D-glucosamine from N-acetyl-alpha-D-glucosamine 1-phosphate: step 1/1. Its pathway is bacterial outer membrane biogenesis; LPS lipid A biosynthesis. Catalyzes the last two sequential reactions in the de novo biosynthetic pathway for UDP-N-acetylglucosamine (UDP-GlcNAc). The C-terminal domain catalyzes the transfer of acetyl group from acetyl coenzyme A to glucosamine-1-phosphate (GlcN-1-P) to produce N-acetylglucosamine-1-phosphate (GlcNAc-1-P), which is converted into UDP-GlcNAc by the transfer of uridine 5-monophosphate (from uridine 5-triphosphate), a reaction catalyzed by the N-terminal domain. This Sphingopyxis alaskensis (strain DSM 13593 / LMG 18877 / RB2256) (Sphingomonas alaskensis) protein is Bifunctional protein GlmU.